Consider the following 600-residue polypeptide: Integrator complex subunit 11 (600 aa).

Positions 68, 70, 72, 73, 157, and 178 each coordinate Zn(2+). Positions 68 to 73 (HFHLDH) match the HXHXDH motif motif. Glu203 is a catalytic residue. His414 contributes to the Zn(2+) binding site. Positions 469 to 479 (LLPDAKKPKLM) match the Nuclear localization signal motif.

Belongs to the metallo-beta-lactamase superfamily. RNA-metabolizing metallo-beta-lactamase-like family. INTS11 subfamily. Component of the Integrator complex, composed of core subunits INTS1, INTS2, INTS3, INTS4, INTS5, INTS6, INTS7, INTS8, INTS9/RC74, INTS10, INTS11/CPSF3L, INTS12, INTS13, INTS14 and INTS15. The core complex associates with protein phosphatase 2A subunits PPP2CA and PPP2R1A, to form the Integrator-PP2A (INTAC) complex. INTS11 is part of the RNA endonuclease subcomplex, composed of INTS4, INTS9, INTS11 and inositol hexakisphosphate (InsP6). The cofactor is Zn(2+).

The protein resides in the nucleus. Its subcellular location is the cytoplasm. In terms of biological role, RNA endonuclease component of the integrator complex, a multiprotein complex that terminates RNA polymerase II (Pol II) transcription in the promoter-proximal region of genes. The integrator complex provides a quality checkpoint during transcription elongation by driving premature transcription termination of transcripts that are unfavorably configured for transcriptional elongation: the complex terminates transcription by (1) catalyzing dephosphorylation of the C-terminal domain (CTD) of Pol II subunit POLR2A/RPB1 and SUPT5H/SPT5, (2) degrading the exiting nascent RNA transcript via endonuclease activity and (3) promoting the release of Pol II from bound DNA. The integrator complex is also involved in terminating the synthesis of non-coding Pol II transcripts, such as enhancer RNAs (eRNAs), small nuclear RNAs (snRNAs), telomerase RNAs and long non-coding RNAs (lncRNAs). Within the integrator complex, INTS11 constitutes the RNA endonuclease subunit that degrades exiting nascent RNA transcripts. This is Integrator complex subunit 11 (INTS11) from Gallus gallus (Chicken).